The primary structure comprises 1056 residues: Multidrug resistance protein MdtB (1056 aa).

12 helical membrane passes run 16 to 36 (FILRPVATTLFMIAILLAGII), 342 to 362 (DVQFELLLAIALVVMVIYVFL), 373 to 393 (IAVPLSLVGTFAVMYFCGFSV), 396 to 416 (LTLMALTIAAGFVVDDAIVVI), 440 to 460 (IGFTIISLTFSLIAVLIPLLF), 472 to 492 (FAITLAVAILISAVVSLTLTP), 537 to 557 (WITLGVAFSTLAFTALLYLTI), 869 to 889 (LILAAVISMYIVLGILYESFI), 890 to 910 (HPVTILSTLPTAGVGALLALM), 911 to 931 (VGGYELDIIAIIGIILLIGIV), 968 to 988 (ILMTTMAALLGALPLMLSTGI), and 1002 to 1022 (GGLIMSQILTLFTTPVIYLLF). A disordered region spans residues 1037 to 1056 (LQSQNQRELDHSPVNHQEPL). Basic and acidic residues predominate over residues 1043 to 1056 (RELDHSPVNHQEPL).

It belongs to the resistance-nodulation-cell division (RND) (TC 2.A.6) family. MdtB subfamily. In terms of assembly, part of a tripartite efflux system composed of MdtA, MdtB and MdtC. MdtB forms a heteromultimer with MdtC.

The protein resides in the cell inner membrane. The sequence is that of Multidrug resistance protein MdtB from Xenorhabdus bovienii (strain SS-2004) (Xenorhabdus nematophila subsp. bovienii).